We begin with the raw amino-acid sequence, 255 residues long: 5'-nucleotidase SurE (255 aa).

Residues Asp-8, Asp-9, Ser-40, and Asn-93 each contribute to the a divalent metal cation site.

Belongs to the SurE nucleotidase family. A divalent metal cation serves as cofactor.

The protein localises to the cytoplasm. The enzyme catalyses a ribonucleoside 5'-phosphate + H2O = a ribonucleoside + phosphate. In terms of biological role, nucleotidase that shows phosphatase activity on nucleoside 5'-monophosphates. The polypeptide is 5'-nucleotidase SurE (Bradyrhizobium diazoefficiens (strain JCM 10833 / BCRC 13528 / IAM 13628 / NBRC 14792 / USDA 110)).